The chain runs to 61 residues: Large ribosomal subunit protein bL28 (61 aa).

Belongs to the bacterial ribosomal protein bL28 family.

The chain is Large ribosomal subunit protein bL28 from Geobacillus thermodenitrificans (strain NG80-2).